An 895-amino-acid chain; its full sequence is Zinc finger protein 574 (895 aa).

3 consecutive C2H2-type zinc fingers follow at residues 16-38 (YVCS…QNSH), 76-98 (YQCL…QELH), and 126-148 (YECV…RQTH). A Phosphoserine modification is found at S164. The C2H2-type 4 zinc finger occupies 214–236 (YKCSECSQLFQLPADFLEHQATH). The disordered stretch occupies residues 239-301 (APVPESQEPA…RARRNNSGEA (63 aa)). Residues 247-257 (PALQQEVQASS) are compositionally biased toward polar residues. Basic and acidic residues predominate over residues 274 to 287 (HSYELRNGEAIGRD). S298 is modified (phosphoserine). 4 C2H2-type zinc fingers span residues 309–331 (LFCS…LRSH), 336–358 (FKCP…LGDH), 364–386 (FLCV…RRAH), and 392–413 (HSCP…RRTH). The tract at residues 434-460 (FPEPAPAETGEPEAPEPPVSEETSAGP) is disordered. 6 C2H2-type zinc fingers span residues 466–489 (YRCL…RFVH), 495–517 (HKCS…LRTH), 523–545 (FPCP…RLTH), 551–573 (YRCG…RLVH), 579–601 (YRCQ…RYHH), and 607–630 (YKCR…LVVH). The segment at 636–659 (HRCPSCGAAFPSSLRLREHRCAAA) adopts a C2H2-type 15; degenerate zinc-finger fold. The C2H2-type 16 zinc finger occupies 667 to 689 (FECGTCGKKVGSAARLQAHEAAH). The tract at residues 687–732 (AAHAAAGPGEVLAKEPPAPRAPRATRAPVASPAALGGTATASPAPA) is disordered. Over residues 707 to 731 (APRATRAPVASPAALGGTATASPAP) the composition is skewed to low complexity. Position 717 is a phosphoserine (S717). A Phosphothreonine modification is found at T724. Phosphoserine is present on S728. 4 C2H2-type zinc fingers span residues 737–759 (LECS…RRIH), 765–787 (YPCP…RRLH), 793–815 (FACE…RRIH), and 821–843 (YSCP…RKTH). R831 carries the asymmetric dimethylarginine modification.

It belongs to the krueppel C2H2-type zinc-finger protein family.

It localises to the nucleus. Its function is as follows. May be involved in transcriptional regulation. This chain is Zinc finger protein 574 (ZNF574), found in Pongo abelii (Sumatran orangutan).